A 589-amino-acid polypeptide reads, in one-letter code: Bifunctional protein TrpGD (589 aa).

Residues 46 to 241 (RVIVIDNYDS…LNIQDIQVKK (196 aa)) form the Glutamine amidotransferase type-1 domain. Residue 99-101 (GPG) coordinates L-glutamine. Residue Cys126 is the Nucleophile; for GATase activity of the active site. L-glutamine-binding positions include Gln130 and 176-177 (SL). Catalysis depends on for GATase activity residues His215 and Glu217. Positions 253–589 (ALKKLVEFED…MDYQKTLGNS (337 aa)) are anthranilate phosphoribosyltransferase.

It in the C-terminal section; belongs to the anthranilate phosphoribosyltransferase family. As to quaternary structure, heterotetramer consisting of two non-identical subunits: a beta subunit (TrpG) and a large alpha subunit (TrpE).

It catalyses the reaction chorismate + L-glutamine = anthranilate + pyruvate + L-glutamate + H(+). The enzyme catalyses N-(5-phospho-beta-D-ribosyl)anthranilate + diphosphate = 5-phospho-alpha-D-ribose 1-diphosphate + anthranilate. The protein operates within amino-acid biosynthesis; L-tryptophan biosynthesis; L-tryptophan from chorismate: step 1/5. It functions in the pathway amino-acid biosynthesis; L-tryptophan biosynthesis; L-tryptophan from chorismate: step 2/5. Its function is as follows. Part of a heterotetrameric complex that catalyzes the two-step biosynthesis of anthranilate, an intermediate in the biosynthesis of L-tryptophan. In the first step, the glutamine-binding beta subunit (TrpG) of anthranilate synthase (AS) provides the glutamine amidotransferase activity which generates ammonia as a substrate that, along with chorismate, is used in the second step, catalyzed by the large alpha subunit of AS (TrpE) to produce anthranilate. In the absence of TrpG, TrpE can synthesize anthranilate directly from chorismate and high concentrations of ammonia. In addition to synthesizing anthranilate, it also catalyzes the second step of the pathway, the transfer of the phosphoribosyl group of 5-phosphorylribose-1-pyrophosphate (PRPP) to anthranilate. This chain is Bifunctional protein TrpGD (trpGD), found in Thermotoga maritima (strain ATCC 43589 / DSM 3109 / JCM 10099 / NBRC 100826 / MSB8).